Reading from the N-terminus, the 443-residue chain is ATP-dependent protease ATPase subunit HslU (443 aa).

Residues Ile20, Gly62–Glu67, Asp255, Glu321, and Arg393 contribute to the ATP site.

It belongs to the ClpX chaperone family. HslU subfamily. In terms of assembly, a double ring-shaped homohexamer of HslV is capped on each side by a ring-shaped HslU homohexamer. The assembly of the HslU/HslV complex is dependent on binding of ATP.

The protein localises to the cytoplasm. In terms of biological role, ATPase subunit of a proteasome-like degradation complex; this subunit has chaperone activity. The binding of ATP and its subsequent hydrolysis by HslU are essential for unfolding of protein substrates subsequently hydrolyzed by HslV. HslU recognizes the N-terminal part of its protein substrates and unfolds these before they are guided to HslV for hydrolysis. This chain is ATP-dependent protease ATPase subunit HslU, found in Helicobacter pylori (strain J99 / ATCC 700824) (Campylobacter pylori J99).